The chain runs to 127 residues: Small ribosomal subunit protein uS11 (127 aa).

The protein belongs to the universal ribosomal protein uS11 family. As to quaternary structure, part of the 30S ribosomal subunit. Interacts with proteins S7 and S18. Binds to IF-3.

Its function is as follows. Located on the platform of the 30S subunit, it bridges several disparate RNA helices of the 16S rRNA. Forms part of the Shine-Dalgarno cleft in the 70S ribosome. The chain is Small ribosomal subunit protein uS11 from Rhodopirellula baltica (strain DSM 10527 / NCIMB 13988 / SH1).